A 162-amino-acid chain; its full sequence is Phospholipase A and acyltransferase 2 (162 aa).

The Cytoplasmic portion of the chain corresponds to 1–133 (MALARPRPRL…VSRSDQVTGA (133 aa)). An LRAT domain is found at 13 to 129 (LIEISRFGYA…LRYGVSRSDQ (117 aa)). Residues H23 and H35 contribute to the active site. The active-site Acyl-thioester intermediate is the C113. Residues 134–154 (VTTVGVAAGLLAAASLVGILL) form a helical membrane-spanning segment. The Lumenal segment spans residues 155–162 (ARSKRERQ).

Belongs to the H-rev107 family. In terms of tissue distribution, expressed in liver, kidney, small intestine testis and colon. Undetectable in testis, placenta, salivary gland and fetal brain.

It localises to the cytoplasm. Its subcellular location is the membrane. It catalyses the reaction a 1,2-diacyl-sn-glycero-3-phosphocholine + H2O = a 1-acyl-sn-glycero-3-phosphocholine + a fatty acid + H(+). It carries out the reaction a 1,2-diacyl-sn-glycero-3-phosphocholine + H2O = a 2-acyl-sn-glycero-3-phosphocholine + a fatty acid + H(+). The catalysed reaction is a 1,2-diacyl-sn-glycero-3-phosphoethanolamine + a 1,2-diacyl-sn-glycero-3-phosphocholine = an N-acyl-1,2-diacyl-sn-glycero-3-phosphoethanolamine + a 1-acyl-sn-glycero-3-phosphocholine + H(+). The enzyme catalyses a 1,2-diacyl-sn-glycero-3-phosphoethanolamine + a 1,2-diacyl-sn-glycero-3-phosphocholine = an N-acyl-1,2-diacyl-sn-glycero-3-phosphoethanolamine + a 2-acyl-sn-glycero-3-phosphocholine + H(+). It catalyses the reaction 1,2-dihexadecanoyl-sn-glycero-3-phosphocholine + H2O = 1-hexadecanoyl-sn-glycero-3-phosphocholine + hexadecanoate + H(+). It carries out the reaction 1,2-dihexadecanoyl-sn-glycero-3-phosphocholine + H2O = 2-hexadecanoyl-sn-glycero-3-phosphocholine + hexadecanoate + H(+). The catalysed reaction is 1-hexadecanoyl-2-(9Z-octadecenoyl)-sn-glycero-3-phosphocholine + H2O = 2-(9Z-octadecenoyl)-sn-glycero-3-phosphocholine + hexadecanoate + H(+). The enzyme catalyses 1-hexadecanoyl-2-(9Z-octadecenoyl)-sn-glycero-3-phosphocholine + H2O = 1-hexadecanoyl-sn-glycero-3-phosphocholine + (9Z)-octadecenoate + H(+). It catalyses the reaction 1-hexadecanoyl-2-(5Z,8Z,11Z,14Z-eicosatetraenoyl)-sn-glycero-3-phosphocholine + H2O = 2-(5Z,8Z,11Z,14Z)-eicosatetraenoyl-sn-glycero-3-phosphocholine + hexadecanoate + H(+). It carries out the reaction 1-hexadecanoyl-2-(9Z,12Z-octadecadienoyl)-sn-glycero-3-phosphoethanolamine + H2O = 1-hexadecanoyl-sn-glycero-3-phosphoethanolamine + (9Z,12Z)-octadecadienoate + H(+). The catalysed reaction is 1-hexadecanoyl-2-(9Z,12Z-octadecadienoyl)-sn-glycero-3-phosphoethanolamine + H2O = 2-(9Z,12Z)-octadecadienoyl-sn-glycero-3-phosphoethanolamine + hexadecanoate + H(+). The enzyme catalyses 1-hexadecanoyl-2-(5Z,8Z,11Z,14Z-eicosatetraenoyl)-sn-glycero-3-phosphoethanolamine + H2O = 1-hexadecanoyl-sn-glycero-3-phosphoethanolamine + (5Z,8Z,11Z,14Z)-eicosatetraenoate + H(+). It catalyses the reaction 1-hexadecanoyl-2-(5Z,8Z,11Z,14Z-eicosatetraenoyl)-sn-glycero-3-phosphoethanolamine + H2O = 2-(5Z,8Z,11Z,14Z)-eicosatetraenoyl-sn-glycero-3-phosphoethanolamine + hexadecanoate + H(+). It carries out the reaction 1,2-di-(9Z-octadecenoyl)-sn-glycero-3-phosphoethanolamine + 1,2-dihexadecanoyl-sn-glycero-3-phosphocholine = N-hexadecanoyl-1,2-di-(9Z-octadecenoyl)-sn-glycero-3-phosphoethanolamine + 2-hexadecanoyl-sn-glycero-3-phosphocholine + H(+). The catalysed reaction is 1,2-di-(9Z-octadecenoyl)-sn-glycero-3-phosphoethanolamine + 1,2-dihexadecanoyl-sn-glycero-3-phosphocholine = N-hexadecanoyl-1,2-di-(9Z-octadecenoyl)-sn-glycero-3-phosphoethanolamine + 1-hexadecanoyl-sn-glycero-3-phosphocholine + H(+). The enzyme catalyses 1-hexanoyl-2-acyl-sn-glycero-3-phosphocholine + H2O = 1-hexanoyl-sn-glycero-3-phosphocholine + a fatty acid + H(+). It catalyses the reaction 1,2-diheptadecanoyl-sn-glycero-3-phosphoethanolamine + 1-(9Z-octadecenoyl)-2-hexadecanoyl-sn-glycero-3-phosphocholine = 1,2-diheptadecanoyl-sn-glycero-3-phospho-N-hexadecanoyl-ethanolamine + 1-(9Z-octadecenoyl)-sn-glycero-3-phosphocholine + H(+). It carries out the reaction 1,2-diheptadecanoyl-sn-glycero-3-phosphoethanolamine + 1-(9Z-octadecenoyl)-2-hexadecanoyl-sn-glycero-3-phosphocholine = 1,2-diheptadecanoyl-sn-glycero-3-phospho-N-(9Z-octadecenoyl)-ethanolamine + 2-hexadecanoyl-sn-glycero-3-phosphocholine + H(+). The catalysed reaction is 1,2-dihexanoyl-sn-glycero-3-phosphocholine + 1,2-diheptanoyl-sn-glycero-3-phosphocholine = 1-heptanoyl-2-hexanoyl-sn-glycero-3-phosphocholine + 1-hexanoyl-2-heptanoyl-sn-glycero-3-phosphocholine. The enzyme catalyses 1,2-diheptanoyl-sn-glycero-3-phosphocholine + 1,2-dihexadecanoyl-sn-glycero-3-phosphocholine = 1-hexadecanoyl-2-heptanoyl-sn-glycero-3-phosphocholine + 1-heptanoyl-2-hexadecanoyl-sn-glycero-3-phosphocholine. It catalyses the reaction 1,2-dihexanoyl-sn-glycero-3-phosphoethanolamine + 1,2-diheptanoyl-sn-glycero-3-phosphocholine = 1-heptanoyl-2-hexanoyl-sn-glycero-3-phosphoethanolamine + 1-hexanoyl-2-heptanoyl-sn-glycero-3-phosphocholine. It carries out the reaction 1-hexanoyl-2-acyl-sn-glycero-3-phosphocholine + H2O = hexanoate + a 2-acyl-sn-glycero-3-phosphocholine + H(+). The catalysed reaction is 1,2-dihexanoyl-sn-glycero-3-phosphoethanolamine + 2-heptanoyl-sn-glycero-3-phosphocholine = hexanoyl-sn-glycero-3-phosphoethanolamine + 1-hexanoyl-2-heptanoyl-sn-glycero-3-phosphocholine. Exhibits both phospholipase A1/2 and acyltransferase activities. Shows phospholipase A1 (PLA1) and A2 (PLA2) activity, catalyzing the calcium-independent release of fatty acids from the sn-1 or sn-2 position of glycerophospholipids. For most substrates, PLA1 activity is much higher than PLA2 activity. Shows O-acyltransferase activity, catalyzing the transfer of a fatty acyl group from glycerophospholipid to the hydroxyl group of lysophospholipid. Shows N-acyltransferase activity, catalyzing the calcium-independent transfer of a fatty acyl group at the sn-1 position of phosphatidylcholine (PC) and other glycerophospholipids to the primary amine of phosphatidylethanolamine (PE), forming N-acylphosphatidylethanolamine (NAPE), which serves as precursor for N-acylethanolamines (NAEs). Catalyzes N-acylation of PE using both sn-1 and sn-2 palmitoyl groups of PC as acyl donor. Exhibits high phospholipase A1/2 activity and low N-acyltransferase activity. The chain is Phospholipase A and acyltransferase 2 from Homo sapiens (Human).